Reading from the N-terminus, the 156-residue chain is ATP synthase subunit b (156 aa).

The chain crosses the membrane as a helical span at residues 12-32; sequence VAFLIFVLFCMKYVWPPVITA.

Belongs to the ATPase B chain family. As to quaternary structure, F-type ATPases have 2 components, F(1) - the catalytic core - and F(0) - the membrane proton channel. F(1) has five subunits: alpha(3), beta(3), gamma(1), delta(1), epsilon(1). F(0) has three main subunits: a(1), b(2) and c(10-14). The alpha and beta chains form an alternating ring which encloses part of the gamma chain. F(1) is attached to F(0) by a central stalk formed by the gamma and epsilon chains, while a peripheral stalk is formed by the delta and b chains.

It localises to the cell inner membrane. Functionally, f(1)F(0) ATP synthase produces ATP from ADP in the presence of a proton or sodium gradient. F-type ATPases consist of two structural domains, F(1) containing the extramembraneous catalytic core and F(0) containing the membrane proton channel, linked together by a central stalk and a peripheral stalk. During catalysis, ATP synthesis in the catalytic domain of F(1) is coupled via a rotary mechanism of the central stalk subunits to proton translocation. Component of the F(0) channel, it forms part of the peripheral stalk, linking F(1) to F(0). This is ATP synthase subunit b from Pseudomonas putida (strain ATCC 700007 / DSM 6899 / JCM 31910 / BCRC 17059 / LMG 24140 / F1).